The chain runs to 417 residues: Probable glucuronosyltransferase Os01g0926700 (417 aa).

Topologically, residues 1–3 are cytoplasmic; that stretch reads MRR. A helical; Signal-anchor for type II membrane protein membrane pass occupies residues 4 to 24; sequence WVLAIAILAAAVCFFLGAQAQ. Over 25–417 the chain is Lumenal; sequence EVRQGHQTER…AGPVGDLKPW (393 aa). Asparagine 144 and asparagine 405 each carry an N-linked (GlcNAc...) asparagine glycan.

The protein belongs to the glycosyltransferase 47 family.

The protein resides in the golgi apparatus membrane. In terms of biological role, involved in the synthesis of glucuronoxylan hemicellulose in secondary cell walls. This Oryza sativa subsp. japonica (Rice) protein is Probable glucuronosyltransferase Os01g0926700.